A 247-amino-acid polypeptide reads, in one-letter code: tRNA (guanine-N(1)-)-methyltransferase (247 aa).

S-adenosyl-L-methionine contacts are provided by residues Gly115 and 134 to 139 (IGDFVL).

It belongs to the RNA methyltransferase TrmD family. Homodimer.

The protein resides in the cytoplasm. It catalyses the reaction guanosine(37) in tRNA + S-adenosyl-L-methionine = N(1)-methylguanosine(37) in tRNA + S-adenosyl-L-homocysteine + H(+). Specifically methylates guanosine-37 in various tRNAs. The protein is tRNA (guanine-N(1)-)-methyltransferase of Anaeromyxobacter dehalogenans (strain 2CP-C).